The following is a 147-amino-acid chain: TRAP-T-associated universal stress protein TeaD (147 aa).

Residues 8 to 10 (PVD), V38, 117 to 122 (GAQGTN), and 131 to 133 (SVA) each bind ATP.

It belongs to the universal stress protein A family. As to quaternary structure, homodimer or homotetramer; in equilibrium. The dimer/tetramer ratio is ATP-dependent. ATP stabilizes dimer-dimer complexes, with one ATP molecule bound to each monomer.

Its subcellular location is the cytoplasm. In terms of biological role, ATP-binding protein that negatively regulates activity of the tripartite ATP-independent periplasmic (TRAP) ectoine transport system TeaABC. May regulate uptake according to the ATP status of the cell. This chain is TRAP-T-associated universal stress protein TeaD (teaD), found in Halomonas elongata (strain ATCC 33173 / DSM 2581 / NBRC 15536 / NCIMB 2198 / 1H9).